We begin with the raw amino-acid sequence, 613 residues long: Dihydroxy-acid dehydratase (613 aa).

Asp81 is a Mg(2+) binding site. Cys122 lines the [2Fe-2S] cluster pocket. Mg(2+)-binding residues include Asp123 and Lys124. Residue Lys124 is modified to N6-carboxylysine. Residue Cys195 participates in [2Fe-2S] cluster binding. Residue Glu491 coordinates Mg(2+). Ser517 serves as the catalytic Proton acceptor.

Belongs to the IlvD/Edd family. As to quaternary structure, homodimer. [2Fe-2S] cluster serves as cofactor. The cofactor is Mg(2+).

The catalysed reaction is (2R)-2,3-dihydroxy-3-methylbutanoate = 3-methyl-2-oxobutanoate + H2O. It carries out the reaction (2R,3R)-2,3-dihydroxy-3-methylpentanoate = (S)-3-methyl-2-oxopentanoate + H2O. Its pathway is amino-acid biosynthesis; L-isoleucine biosynthesis; L-isoleucine from 2-oxobutanoate: step 3/4. It functions in the pathway amino-acid biosynthesis; L-valine biosynthesis; L-valine from pyruvate: step 3/4. In terms of biological role, functions in the biosynthesis of branched-chain amino acids. Catalyzes the dehydration of (2R,3R)-2,3-dihydroxy-3-methylpentanoate (2,3-dihydroxy-3-methylvalerate) into 2-oxo-3-methylpentanoate (2-oxo-3-methylvalerate) and of (2R)-2,3-dihydroxy-3-methylbutanoate (2,3-dihydroxyisovalerate) into 2-oxo-3-methylbutanoate (2-oxoisovalerate), the penultimate precursor to L-isoleucine and L-valine, respectively. The chain is Dihydroxy-acid dehydratase from Buchnera aphidicola subsp. Melaphis rhois.